The chain runs to 386 residues: tRNA-specific 2-thiouridylase MnmA (386 aa).

ATP is bound by residues 9–16 and Met-35; that span reads GMSGGVDS. Residues 95-97 form an interaction with target base in tRNA region; it reads NPD. Cys-100 (nucleophile) is an active-site residue. A disulfide bond links Cys-100 and Cys-196. Residue Gly-124 participates in ATP binding. Positions 146–148 are interaction with tRNA; the sequence is KDQ. Residue Cys-196 is the Cysteine persulfide intermediate of the active site. The interaction with tRNA stretch occupies residues 308 to 309; sequence RY.

It belongs to the MnmA/TRMU family.

The protein localises to the cytoplasm. The enzyme catalyses S-sulfanyl-L-cysteinyl-[protein] + uridine(34) in tRNA + AH2 + ATP = 2-thiouridine(34) in tRNA + L-cysteinyl-[protein] + A + AMP + diphosphate + H(+). Functionally, catalyzes the 2-thiolation of uridine at the wobble position (U34) of tRNA, leading to the formation of s(2)U34. This Burkholderia thailandensis (strain ATCC 700388 / DSM 13276 / CCUG 48851 / CIP 106301 / E264) protein is tRNA-specific 2-thiouridylase MnmA.